Reading from the N-terminus, the 3317-residue chain is Cadherin-23 (3317 aa).

The signal sequence occupies residues 1–23; that stretch reads MRHPPVTWCAMLWLLMLVSGSWG. Topologically, residues 24-3062 are extracellular; it reads QVNRLPFFTN…SVQLPDDMSA (3039 aa). 27 consecutive Cadherin domains span residues 34-132, 133-236, 237-348, 349-458, 459-559, 560-669, 670-782, 777-888, 889-993, 994-1100, 1101-1206, 1208-1311, 1312-1416, 1418-1525, 1527-1632, 1633-1742, 1743-1849, 1850-1957, 1958-2067, 2068-2172, 2173-2291, 2295-2400, 2401-2507, 2508-2609, 2612-2720, 2727-2844, and 2845-2973; these read HFFD…APTF, HNQP…DPIF, INLP…APEF, NSSE…RPIF, SQPL…VPTF, QKDA…PPTF, SKPA…APYY, KDAP…DPTF, QNLP…TPTF, FPAV…RPIF, LQSS…APVF, QQQY…AVQF, SNAS…SPRF, FTSD…PPVI, SPFG…APVF, QQPH…VPTF, PRDY…DPVL, LNLP…HPLF, TEGT…WPTF, SPPA…RPEF, LNPI…TPQF, GITY…NPIF, DQLS…RPQF, SKPQ…RPVF, PPNG…EPLF, SPQY…PPRF, and TKAE…EEEF. 2 N-linked (GlcNAc...) asparagine glycosylation sites follow: asparagine 155 and asparagine 206. Residues asparagine 349, asparagine 391, asparagine 432, asparagine 464, asparagine 470, asparagine 600, asparagine 692, asparagine 763, asparagine 808, asparagine 825, asparagine 939, asparagine 999, asparagine 1016, asparagine 1169, asparagine 1280, asparagine 1313, asparagine 1471, asparagine 1532, asparagine 1649, asparagine 1665, asparagine 1816, asparagine 1855, asparagine 1887, asparagine 1900, asparagine 2012, asparagine 2048, asparagine 2127, asparagine 2166, asparagine 2193, asparagine 2261, asparagine 2355, and asparagine 2367 are each glycosylated (N-linked (GlcNAc...) asparagine). N-linked (GlcNAc...) asparagine glycans are attached at residues asparagine 2576, asparagine 2614, asparagine 2747, asparagine 2806, asparagine 2875, asparagine 2894, asparagine 2939, and asparagine 2979. The helical transmembrane segment at 3063–3083 threads the bilayer; sequence LQMAIIVLAILLFLAAMLFVL. At 3084-3317 the chain is on the cytoplasmic side; that stretch reads MNWYYRTIHK…MESPLEITEL (234 aa).

Antiparallel heterodimer with PCDH15. Interacts with USH1C and USH1G.

The protein localises to the cell membrane. Its function is as follows. Cadherins are calcium-dependent cell adhesion proteins. They preferentially interact with themselves in a homophilic manner in connecting cells. CDH23 is required for establishing and/or maintaining the proper organization of the stereocilia bundle of hair cells in the cochlea and the vestibule during late embryonic/early postnatal development. It is part of the functional network formed by USH1C, USH1G, CDH23 and MYO7A that mediates mechanotransduction in cochlear hair cells. Required for normal hearing. This is Cadherin-23 (Cdh23) from Rattus norvegicus (Rat).